The chain runs to 537 residues: uncharacterized protein (537 aa).

The first 15 residues, 1-15 (MALFQLFSFLNVTLG), serve as a signal peptide directing secretion. The next 2 helical transmembrane spans lie at 459 to 479 (VLFS…GCCF) and 490 to 510 (VILL…LGFT).

It is found in the host membrane. This is an uncharacterized protein from Citrus sinensis (Sweet orange).